A 509-amino-acid polypeptide reads, in one-letter code: tRNA (guanine(37)-N(1))-methyltransferase (509 aa).

Residues His-289, 327–328 (DL), 355–356 (DG), and Asn-387 each bind S-adenosyl-L-methionine. Residues 478–509 (TRNPENHEDPPLKRQRTAEAFSDEKTQIVSNT) are disordered.

It belongs to the class I-like SAM-binding methyltransferase superfamily. TRM5/TYW2 family. In terms of assembly, monomer.

The protein localises to the mitochondrion matrix. It localises to the nucleus. The protein resides in the cytoplasm. It carries out the reaction guanosine(37) in tRNA + S-adenosyl-L-methionine = N(1)-methylguanosine(37) in tRNA + S-adenosyl-L-homocysteine + H(+). In terms of biological role, involved in mitochondrial tRNA methylation. Specifically methylates the N1 position of guanosine-37 in various tRNAs. Methylation is not dependent on the nature of the nucleoside 5' of the target nucleoside. This is the first step in the biosynthesis of wybutosine (yW), a modified base adjacent to the anticodon of tRNAs and required for accurate decoding. This is tRNA (guanine(37)-N(1))-methyltransferase from Homo sapiens (Human).